The chain runs to 156 residues: MFGKVSSLLVFASFLIIQGAFATLVAPIGDLEHLSEIELLYTNRVLPSKIPLTPFVKRDDDSSSTQASYSTTVSDVVIVTDKSWSDGVETIFPYSYTEYQPSTTYTSAPAGSIGYAASIPNTGRELMESGSPVRFSKSSLLIVSLLSIAAFAALVL.

The N-terminal stretch at 1-22 (MFGKVSSLLVFASFLIIQGAFA) is a signal peptide. A lipid anchor (GPI-anchor amidated serine) is attached at Ser129. A propeptide spans 130–156 (GSPVRFSKSSLLIVSLLSIAAFAALVL) (removed in mature form).

Its subcellular location is the cell membrane. This is an uncharacterized protein from Schizosaccharomyces pombe (strain 972 / ATCC 24843) (Fission yeast).